We begin with the raw amino-acid sequence, 647 residues long: MKNEPIYNLLNSINSPDDLRRLEVDQLPEVCDELRQDIIKELSCNPGHFAASLGTVELTVALHYVYNTPYDRIVWDVGHQAYGHKILTGRREAFSTNRKLGGIRPFPSPEESEYDTFTCGHASNSISAALGMAVAAAKKGDDQRHVIAIIGDGSMSGGLAFEGLNNSSTTPNNLLIILNDNDMAIDRSVGGMKQYLFNLTTSNRYNQLRFKASRLLFKLGILNDERRKALIRFGNSLKSMAAQQQNIFEGMNIRYFGPIDGHDIKNLSRVLRDIKDLKGPKILHLHTIKGKGFAPAEKHATEWHAPGKFDPVTGERFVANTEGMPPLFQDVFGNTLVELAEANPRIVGVTPAMPSGCSMNILMSKMPKRAFDVGIAEGHAVTFSGGMAKDGLQPFCNIYSSFMQRAYDNIIHDVAIQNLPVVLCLDRAGLVGEDGPTHHGAFDMAYLRPIPNLTIASPMNEHELRRLMYTAQLPDKGPFVLRYPRGRGVLVDWKCPLEEIPVGKGRKLKDGKDIAVISIGPIGNKARSAIARAESESGRSIAHYDLRFLKPLDEELLHEVGRTFRHIVTIEDGTIQGGMGSAVLEFMADHEYTPTVKRIGIPDKFVQHGTVAELYQLCGMDEDSLTKELLKQCELLPDMSKIKELTN.

Thiamine diphosphate contacts are provided by residues His-79 and 120–122 (GHA). Asp-152 serves as a coordination point for Mg(2+). Residues 153-154 (GS), Asn-181, Phe-293, and Glu-377 each bind thiamine diphosphate. Position 181 (Asn-181) interacts with Mg(2+).

This sequence belongs to the transketolase family. DXPS subfamily. In terms of assembly, homodimer. It depends on Mg(2+) as a cofactor. The cofactor is thiamine diphosphate.

The enzyme catalyses D-glyceraldehyde 3-phosphate + pyruvate + H(+) = 1-deoxy-D-xylulose 5-phosphate + CO2. It functions in the pathway metabolic intermediate biosynthesis; 1-deoxy-D-xylulose 5-phosphate biosynthesis; 1-deoxy-D-xylulose 5-phosphate from D-glyceraldehyde 3-phosphate and pyruvate: step 1/1. Catalyzes the acyloin condensation reaction between C atoms 2 and 3 of pyruvate and glyceraldehyde 3-phosphate to yield 1-deoxy-D-xylulose-5-phosphate (DXP). The polypeptide is 1-deoxy-D-xylulose-5-phosphate synthase (Bacteroides thetaiotaomicron (strain ATCC 29148 / DSM 2079 / JCM 5827 / CCUG 10774 / NCTC 10582 / VPI-5482 / E50)).